Here is a 634-residue protein sequence, read N- to C-terminus: Chaperone protein DnaK (634 aa).

Phosphothreonine; by autocatalysis is present on Thr-197. Positions 515-528 (LHKEDDKKRKESVD) are enriched in basic and acidic residues. 2 disordered regions span residues 515-536 (LHKEDDKKRKESVDARNGADAI) and 595-634 (YKAASAGKNAGGTAGGNGNAGSNGNSGAKKDDDVIDAEVE). Over residues 603-615 (NAGGTAGGNGNAG) the composition is skewed to gly residues.

It belongs to the heat shock protein 70 family.

In terms of biological role, acts as a chaperone. The polypeptide is Chaperone protein DnaK (Campylobacter hominis (strain ATCC BAA-381 / DSM 21671 / CCUG 45161 / LMG 19568 / NCTC 13146 / CH001A)).